We begin with the raw amino-acid sequence, 431 residues long: Argininosuccinate lyase (431 aa).

The protein belongs to the lyase 1 family. Argininosuccinate lyase subfamily.

The protein localises to the cytoplasm. It carries out the reaction 2-(N(omega)-L-arginino)succinate = fumarate + L-arginine. Its pathway is amino-acid biosynthesis; L-arginine biosynthesis; L-arginine from L-ornithine and carbamoyl phosphate: step 3/3. The chain is Argininosuccinate lyase from Xanthomonas oryzae pv. oryzae (strain MAFF 311018).